A 218-amino-acid chain; its full sequence is MSMRPPDPGQASSRARARMVERLRAQGIADEKVLAAMMQIPRHAFVDEGLAFSAYDDTALPIGYQQTISQPLVVARMIEILRAGRELGRTLEVGAGCGYQAAVLSLVATEVFAVERIRPLLDRARENLRPLRLPNVRLKYADGNLGLPEAAPFDTIIVAAAAAGIPGSLKEQLAPGGRLMIPLGSADQRLVMTERHGNIFRESRFEAVRFVPLLTGTE.

Residue Ser-69 is part of the active site.

Belongs to the methyltransferase superfamily. L-isoaspartyl/D-aspartyl protein methyltransferase family.

The protein resides in the cytoplasm. It carries out the reaction [protein]-L-isoaspartate + S-adenosyl-L-methionine = [protein]-L-isoaspartate alpha-methyl ester + S-adenosyl-L-homocysteine. Catalyzes the methyl esterification of L-isoaspartyl residues in peptides and proteins that result from spontaneous decomposition of normal L-aspartyl and L-asparaginyl residues. It plays a role in the repair and/or degradation of damaged proteins. In Aromatoleum aromaticum (strain DSM 19018 / LMG 30748 / EbN1) (Azoarcus sp. (strain EbN1)), this protein is Protein-L-isoaspartate O-methyltransferase.